The chain runs to 1997 residues: Nucleoprotein TPR (1997 aa).

Coiled-coil stretches lie at residues 1-36 (QEQH…NDLL), 101-277 (EIVK…HQMT), 335-1103 (DSTE…IKTI), and 1129-1305 (AEAS…EPQE). Basic and acidic residues-rich tracts occupy residues 672–702 (SSEY…KTVE) and 1290–1305 (REQQ…EPQE). 6 disordered regions span residues 672–706 (SSEY…QMEQ), 1290–1352 (REQQ…AAVP), 1438–1529 (AFVQ…KTET), 1561–1752 (IQTS…RRQS), 1795–1832 (AIHS…ASQG), and 1870–1997 (ENPA…RSNI). Composition is skewed to polar residues over residues 1306 to 1321 (TTRI…QPTT), 1328 to 1347 (SANT…SKVT), and 1446 to 1487 (SHAT…SSSI). Over residues 1511-1529 (DQQRTKKRKEEDIEEKTET) the composition is skewed to basic and acidic residues. Positions 1561-1587 (IQTSQVIESQAPEQLQNVQSTQDSLQD) are enriched in polar residues. 2 stretches are compositionally biased toward acidic residues: residues 1601 to 1637 (SDEE…DSNE) and 1644 to 1667 (GNED…ETED). Composition is skewed to polar residues over residues 1692–1709 (AEST…SASD), 1817–1830 (QASS…QLAS), and 1879–1899 (HASQ…TSVD). A compositionally biased stretch (acidic residues) spans 1902 to 1915 (AADEGDEVFVEAES). A compositionally biased stretch (low complexity) spans 1950 to 1959 (SSSIADTSSS).

Belongs to the TPR family. In terms of assembly, homodimer. Part of the nuclear pore complex (NPC). Interacts with nuclear receptor KPNB1; the interaction occurs in a RanGTP-dependent manner. Associates with the Importin alpha/Importin beta receptor. In terms of tissue distribution, expressed in epithelial cells, oocytes and egg (at protein level).

The protein localises to the nucleus. The protein resides in the nucleus membrane. It localises to the nucleus envelope. It is found in the nuclear pore complex. Its subcellular location is the cytoplasm. The protein localises to the cytoskeleton. The protein resides in the spindle. It localises to the chromosome. It is found in the centromere. Its subcellular location is the kinetochore. Its function is as follows. Component of the nuclear pore complex (NPC), a complex required for the trafficking across the nuclear envelope. Functions as a scaffolding element in the nuclear phase of the NPC essential for normal nucleocytoplasmic transport of proteins and mRNAs, plays a role in the establishment of nuclear-peripheral chromatin compartmentalization in interphase, and in the mitotic spindle checkpoint signaling during mitosis. Involved in the quality control and retention of unspliced mRNAs in the nucleus. Implicated in nuclear export of mRNAs transcribed from heat shock gene promoters. May play a limited role in the regulation of nuclear protein export. May be involved in the formation and/or maintenance of NPC-associated perinuclear heterochromatin exclusion zones (HEZs). Finally, may act as a spatial regulator of the spindle-assembly checkpoint (SAC) response. The polypeptide is Nucleoprotein TPR (Xenopus laevis (African clawed frog)).